A 228-amino-acid chain; its full sequence is Interleukin-27 subunit beta (228 aa).

Positions 1–18 (MSKLLFLSLALWASRSPG) are cleaved as a signal peptide. 2 consecutive Fibronectin type-III domains span residues 26 to 124 (ALSQ…VAER) and 127 to 224 (KPDP…VESA). N-linked (GlcNAc...) asparagine glycans are attached at residues N54 and N104.

The protein belongs to the type I cytokine receptor family. Type 3 subfamily. In terms of assembly, heterodimer with IL27/IL27A; not disulfide-linked. This heterodimer is known as interleukin IL-27. Heterodimer with IL12A; not disulfide-linked. This heterodimer is known as interleukin IL-35. Interacts with SQSTM1.

It is found in the secreted. Its function is as follows. Associates with IL27 to form the IL-27 interleukin, a heterodimeric cytokine which functions in innate immunity. IL-27 has pro- and anti-inflammatory properties, that can regulate T-helper cell development, suppress T-cell proliferation, stimulate cytotoxic T-cell activity, induce isotype switching in B-cells, and that has diverse effects on innate immune cells. Among its target cells are CD4 T-helper cells which can differentiate in type 1 effector cells (TH1), type 2 effector cells (TH2) and IL17 producing helper T-cells (TH17). It drives rapid clonal expansion of naive but not memory CD4 T-cells. It also strongly synergizes with IL-12 to trigger interferon-gamma/IFN-gamma production of naive CD4 T-cells, binds to the cytokine receptor WSX-1/TCCR. Another important role of IL-27 is its antitumor activity as well as its antiangiogenic activity with activation of production of antiangiogenic chemokines. The polypeptide is Interleukin-27 subunit beta (Ebi3) (Mus musculus (Mouse)).